The sequence spans 115 residues: C-C motif chemokine 6 (115 aa).

A signal peptide spans methionine 1–alanine 21. Disulfide bonds link cysteine 49/cysteine 72, cysteine 50/cysteine 88, and cysteine 59/cysteine 99.

This sequence belongs to the intercrine beta (chemokine CC) family.

The protein localises to the secreted. The polypeptide is C-C motif chemokine 6 (Ccl6) (Rattus norvegicus (Rat)).